The primary structure comprises 310 residues: Porphobilinogen deaminase (310 aa).

An S-(dipyrrolylmethanemethyl)cysteine modification is found at cysteine 242.

The protein belongs to the HMBS family. As to quaternary structure, monomer. Requires dipyrromethane as cofactor.

The catalysed reaction is 4 porphobilinogen + H2O = hydroxymethylbilane + 4 NH4(+). Its pathway is porphyrin-containing compound metabolism; protoporphyrin-IX biosynthesis; coproporphyrinogen-III from 5-aminolevulinate: step 2/4. Its function is as follows. Tetrapolymerization of the monopyrrole PBG into the hydroxymethylbilane pre-uroporphyrinogen in several discrete steps. The polypeptide is Porphobilinogen deaminase (Alcanivorax borkumensis (strain ATCC 700651 / DSM 11573 / NCIMB 13689 / SK2)).